Reading from the N-terminus, the 156-residue chain is Transcription elongation factor GreA (156 aa).

The stretch at 6-75 (IYLTKEGYEK…ELENMLSKAE (70 aa)) forms a coiled coil.

Belongs to the GreA/GreB family.

Necessary for efficient RNA polymerase transcription elongation past template-encoded arresting sites. The arresting sites in DNA have the property of trapping a certain fraction of elongating RNA polymerases that pass through, resulting in locked ternary complexes. Cleavage of the nascent transcript by cleavage factors such as GreA or GreB allows the resumption of elongation from the new 3'terminus. GreA releases sequences of 2 to 3 nucleotides. The polypeptide is Transcription elongation factor GreA (Thermosipho africanus (strain TCF52B)).